Here is a 390-residue protein sequence, read N- to C-terminus: Phosphopentomutase (390 aa).

The Mn(2+) site is built by aspartate 11, aspartate 283, histidine 288, aspartate 324, histidine 325, and histidine 336.

The protein belongs to the phosphopentomutase family. It depends on Mn(2+) as a cofactor.

It localises to the cytoplasm. The enzyme catalyses 2-deoxy-alpha-D-ribose 1-phosphate = 2-deoxy-D-ribose 5-phosphate. It catalyses the reaction alpha-D-ribose 1-phosphate = D-ribose 5-phosphate. The protein operates within carbohydrate degradation; 2-deoxy-D-ribose 1-phosphate degradation; D-glyceraldehyde 3-phosphate and acetaldehyde from 2-deoxy-alpha-D-ribose 1-phosphate: step 1/2. In terms of biological role, isomerase that catalyzes the conversion of deoxy-ribose 1-phosphate (dRib-1-P) and ribose 1-phosphate (Rib-1-P) to deoxy-ribose 5-phosphate (dRib-5-P) and ribose 5-phosphate (Rib-5-P), respectively. This chain is Phosphopentomutase, found in Alkaliphilus metalliredigens (strain QYMF).